Here is a 164-residue protein sequence, read N- to C-terminus: 2-keto-3-deoxy-D-glycero-D-galacto-9-phosphonononic acid phosphatase (164 aa).

Asp-10 and Asp-12 together coordinate Mg(2+). Substrate is bound by residues Thr-34, 54–56 (TGE), 64–67 (RAEK), and Lys-80. Position 103 (Asp-103) interacts with Mg(2+). Asn-106 contacts substrate.

It belongs to the KdsC family. As to quaternary structure, homotetramer. Mg(2+) serves as cofactor.

It carries out the reaction 3-deoxy-D-glycero-beta-D-galacto-non-2-ulopyranosonate 9-phosphate + H2O = 3-deoxy-D-glycero-beta-D-galacto-non-2-ulopyranosonate + phosphate. Its function is as follows. Involved in the biosynthesis of 2-keto-3-deoxy-D-glycero-D-galacto-nononic acid used in cell-wall polysaccharides. Catalyzes the hydrolysis of 2-keto-3-deoxy-D-glycero-D-galacto-9-phosphonononic acid (KDN-9-P) to yield 2-keto-3-deoxy-D-glycero-D-galacto-nononic acid (KDN). Also able to hydrolyze N-acetylneuraminate-9-phosphate (Neu5NAc-9-P), 2-keto-3-deoxy-D-manno-octulosonate-8-phosphate (KDO-8-P), phosphoenolpyruvate (PEP), gluconate 6-phosphate, tyrosine phosphate ester and glucose-6-P as substrate. The protein is 2-keto-3-deoxy-D-glycero-D-galacto-9-phosphonononic acid phosphatase of Bacteroides thetaiotaomicron (strain ATCC 29148 / DSM 2079 / JCM 5827 / CCUG 10774 / NCTC 10582 / VPI-5482 / E50).